The following is a 209-amino-acid chain: Uracil phosphoribosyltransferase (209 aa).

5-phospho-alpha-D-ribose 1-diphosphate is bound by residues Arg-79, Arg-104, and 131–139 (DPMLATGAS). Uracil is bound by residues Ile-194 and 199-201 (GDA). Asp-200 provides a ligand contact to 5-phospho-alpha-D-ribose 1-diphosphate.

Belongs to the UPRTase family. Requires Mg(2+) as cofactor.

It carries out the reaction UMP + diphosphate = 5-phospho-alpha-D-ribose 1-diphosphate + uracil. It participates in pyrimidine metabolism; UMP biosynthesis via salvage pathway; UMP from uracil: step 1/1. With respect to regulation, allosterically activated by GTP. Catalyzes the conversion of uracil and 5-phospho-alpha-D-ribose 1-diphosphate (PRPP) to UMP and diphosphate. In Staphylococcus carnosus (strain TM300), this protein is Uracil phosphoribosyltransferase.